Consider the following 425-residue polypeptide: Serine--tRNA ligase (425 aa).

230 to 232 (TSE) lines the L-serine pocket. ATP-binding positions include 261 to 263 (RRE) and Val277. Position 284 (Glu284) interacts with L-serine. 348–351 (ELTS) serves as a coordination point for ATP. Thr382 is a binding site for L-serine.

This sequence belongs to the class-II aminoacyl-tRNA synthetase family. Type-1 seryl-tRNA synthetase subfamily. Homodimer. The tRNA molecule binds across the dimer.

The protein resides in the cytoplasm. The catalysed reaction is tRNA(Ser) + L-serine + ATP = L-seryl-tRNA(Ser) + AMP + diphosphate + H(+). The enzyme catalyses tRNA(Sec) + L-serine + ATP = L-seryl-tRNA(Sec) + AMP + diphosphate + H(+). Its pathway is aminoacyl-tRNA biosynthesis; selenocysteinyl-tRNA(Sec) biosynthesis; L-seryl-tRNA(Sec) from L-serine and tRNA(Sec): step 1/1. Catalyzes the attachment of serine to tRNA(Ser). Is also able to aminoacylate tRNA(Sec) with serine, to form the misacylated tRNA L-seryl-tRNA(Sec), which will be further converted into selenocysteinyl-tRNA(Sec). The chain is Serine--tRNA ligase from Streptomyces coelicolor (strain ATCC BAA-471 / A3(2) / M145).